Consider the following 232-residue polypeptide: Venom allergen 5 (232 aa).

The signal sequence occupies residues 1 to 23 (MEQIKYLLIGIIFSSAISSSLQC). Intrachain disulfides connect Cys28–Cys43, Cys54–Cys119, and Cys198–Cys215. The 147-residue stretch at 71–217 (LQLHNELRAK…FYTTMVACNY (147 aa)) folds into the SCP domain.

Belongs to the CRISP family. Venom allergen 5-like subfamily. As to expression, expressed by the venom gland.

It localises to the secreted. In Microctonus hyperodae (Parasitoid wasp), this protein is Venom allergen 5.